Here is a 179-residue protein sequence, read N- to C-terminus: Probable protein archease (179 aa).

Ca(2+) is bound by residues D55, D178, and V179.

It belongs to the archease family.

Its function is as follows. Activates the tRNA-splicing ligase complex by facilitating the enzymatic turnover of catalytic subunit RtcB. Acts by promoting the guanylylation of RtcB, a key intermediate step in tRNA ligation. Can also alter the NTP specificity of RtcB such that ATP, dGTP or ITP is used efficiently. The chain is Probable protein archease from Mycobacterium tuberculosis (strain CDC 1551 / Oshkosh).